Here is a 792-residue protein sequence, read N- to C-terminus: Ribonucleoside-diphosphate reductase large subunit (792 aa).

Substrate-binding positions include T200, 215–216 (SC), G246, 415–419 (NLCAE), and 606–610 (PTAGT). C216 and C431 are disulfide-bonded. N415 serves as the catalytic Proton acceptor. C417 functions as the Cysteine radical intermediate in the catalytic mechanism. E419 functions as the Proton acceptor in the catalytic mechanism. Residues 758–781 (SPPHSGMKQDGAWLPGPKNPEEES) are disordered.

Belongs to the ribonucleoside diphosphate reductase large chain family. In terms of assembly, heterotetramer composed of a homodimer of the large subunit (R1) and a homodimer of the small subunit (R2). Larger multisubunit protein complex are also active, composed of (R1)n(R2)n.

The catalysed reaction is a 2'-deoxyribonucleoside 5'-diphosphate + [thioredoxin]-disulfide + H2O = a ribonucleoside 5'-diphosphate + [thioredoxin]-dithiol. Ribonucleoside-diphosphate reductase holoenzyme provides the precursors necessary for viral DNA synthesis. Allows virus growth in non-dividing cells, as well as reactivation from latency in infected hosts. Catalyzes the biosynthesis of deoxyribonucleotides from the corresponding ribonucleotides. This is Ribonucleoside-diphosphate reductase large subunit from Human herpesvirus 8 type P (isolate GK18) (HHV-8).